The chain runs to 315 residues: tRNA dimethylallyltransferase (315 aa).

10–17 (GPTEVGKT) is an ATP binding site. 12–17 (TEVGKT) is a binding site for substrate. Positions 35-38 (DSMQ) are interaction with substrate tRNA.

The protein belongs to the IPP transferase family. In terms of assembly, monomer. Mg(2+) serves as cofactor.

It carries out the reaction adenosine(37) in tRNA + dimethylallyl diphosphate = N(6)-dimethylallyladenosine(37) in tRNA + diphosphate. Functionally, catalyzes the transfer of a dimethylallyl group onto the adenine at position 37 in tRNAs that read codons beginning with uridine, leading to the formation of N6-(dimethylallyl)adenosine (i(6)A). In Geobacillus thermodenitrificans (strain NG80-2), this protein is tRNA dimethylallyltransferase.